A 388-amino-acid polypeptide reads, in one-letter code: Probable nitrate transporter NarT (388 aa).

The next 12 membrane-spanning stretches (helical) occupy residues 14–34, 45–65, 69–89, 98–118, 139–159, 161–181, 206–226, 242–262, 276–296, 297–317, 330–350, and 359–379; these read TLSL…MPMI, ISIV…PFGY, IIGA…PIFL, MLML…VGVT, GNLG…AIGW, STVR…FFLG, YYLS…GIFL, GIRA…GGII, FLFM…ILFT, VGCL…FKLV, GIVS…ITYV, and LAFI…WHLS.

The protein belongs to the major facilitator superfamily. Nitrate/nitrite porter (TC 2.A.1.8) family.

It is found in the cell membrane. Probably required for nitrate uptake under anoxic conditions. Also possibly involved in excretion of nitrite produced by the dissimilatory reduction of nitrate. This Staphylococcus carnosus (strain TM300) protein is Probable nitrate transporter NarT (narT).